A 331-amino-acid chain; its full sequence is Ferredoxin--NADP reductase (331 aa).

Residues Glu38, Gln46, Tyr51, Ala91, Leu125, Asp282, and Ser323 each coordinate FAD.

Belongs to the ferredoxin--NADP reductase type 2 family. As to quaternary structure, homodimer. Requires FAD as cofactor.

It catalyses the reaction 2 reduced [2Fe-2S]-[ferredoxin] + NADP(+) + H(+) = 2 oxidized [2Fe-2S]-[ferredoxin] + NADPH. The protein is Ferredoxin--NADP reductase of Deinococcus geothermalis (strain DSM 11300 / CIP 105573 / AG-3a).